The primary structure comprises 433 residues: UDP-N-acetylglucosamine 1-carboxyvinyltransferase (433 aa).

A phosphoenolpyruvate-binding site is contributed by 34-35 (KN). Arg104 is a UDP-N-acetyl-alpha-D-glucosamine binding site. The Proton donor role is filled by Cys128. A 2-(S-cysteinyl)pyruvic acid O-phosphothioketal modification is found at Cys128. UDP-N-acetyl-alpha-D-glucosamine is bound by residues Asp320 and Ile342.

This sequence belongs to the EPSP synthase family. MurA subfamily.

It localises to the cytoplasm. It catalyses the reaction phosphoenolpyruvate + UDP-N-acetyl-alpha-D-glucosamine = UDP-N-acetyl-3-O-(1-carboxyvinyl)-alpha-D-glucosamine + phosphate. The protein operates within cell wall biogenesis; peptidoglycan biosynthesis. In terms of biological role, cell wall formation. Adds enolpyruvyl to UDP-N-acetylglucosamine. In Parasynechococcus marenigrum (strain WH8102), this protein is UDP-N-acetylglucosamine 1-carboxyvinyltransferase.